Reading from the N-terminus, the 343-residue chain is MSAFTPASEVLLRHSDDFEQSRILFAGDLQDDLPARLDTAASRAHTQQFHHWQVLSRQMGDNARFSLVATANDVADCDTLIYYWPKNKPEAQFQLMNLLSLLPVGTDIFVVGENRSGVRSAEQMLADYAPLNKVDSARRCGLYFGRLEKQPVFDANKFWGEYNVDGLTVKTLPGVFSRDGLDVGSQLLLSTLTPHTKGKVLDVGCGAGVLSVAFARHSPKIRLTLCDVSAPAVEASRATLAANGIEGEVFASNVFSEVKGRFDMIISNPPFHDGMQTSLDAAQTLIRGAVRHLNSGGELRIVANAFLPYPDVLDETFGFHEVIAQTGRFKVYRAIMTRQAKKG.

The protein belongs to the methyltransferase superfamily. RsmC family. In terms of assembly, monomer.

The protein resides in the cytoplasm. The catalysed reaction is guanosine(1207) in 16S rRNA + S-adenosyl-L-methionine = N(2)-methylguanosine(1207) in 16S rRNA + S-adenosyl-L-homocysteine + H(+). Its function is as follows. Specifically methylates the guanine in position 1207 of 16S rRNA in the 30S particle. In Escherichia coli (strain SMS-3-5 / SECEC), this protein is Ribosomal RNA small subunit methyltransferase C.